A 499-amino-acid chain; its full sequence is Alpha-L-arabinofuranosidase B (499 aa).

A signal peptide spans 1–17; it reads MFSRRNLLALGLAATVS. The interval 18–335 is catalytic; sequence AGPCDIYEAG…ENIVAAKYVV (318 aa). 3 cysteine pairs are disulfide-bonded: cysteine 21–cysteine 31, cysteine 81–cysteine 86, and cysteine 176–cysteine 177. Asparagine 83 carries an N-linked (GlcNAc...) asparagine glycan. The N-linked (GlcNAc...) asparagine glycan is linked to asparagine 202. Aspartate 219 serves as a coordination point for substrate. Glutamate 221 (nucleophile) is an active-site residue. Substrate is bound by residues asparagine 222, asparagine 223, and glycine 296. Residue aspartate 297 is the Proton donor of the active site. The segment at 336–499 is ABD; sequence GSLVSGPSFT…SFEIETAFAS (164 aa). A disulfide bridge connects residues cysteine 401 and cysteine 439. Residues histidine 416, asparagine 418, phenylalanine 419, aspartate 435, histidine 463, glutamate 465, leucine 468, and aspartate 488 each coordinate substrate.

It belongs to the glycosyl hydrolase 54 family.

Its subcellular location is the secreted. The enzyme catalyses Hydrolysis of terminal non-reducing alpha-L-arabinofuranoside residues in alpha-L-arabinosides.. The protein operates within glycan metabolism; L-arabinan degradation. Functionally, alpha-L-arabinofuranosidase involved in the degradation of arabinoxylan, a major component of plant hemicellulose. Able to hydrolyze 1,5-, 1,3- and 1,2-alpha-linkages not only in L-arabinofuranosyl oligosaccharides, but also in polysaccharides containing terminal non-reducing L-arabinofuranoses in side chains, like L-arabinan, arabinogalactan and arabinoxylan. In Aspergillus kawachii (strain NBRC 4308) (White koji mold), this protein is Alpha-L-arabinofuranosidase B (abfB).